The primary structure comprises 78 residues: Large ribosomal subunit protein bL28 (78 aa).

Residues 1–23 are disordered; that stretch reads MSRKCQITGKKANNAMAVSHSHR.

It belongs to the bacterial ribosomal protein bL28 family.

This is Large ribosomal subunit protein bL28 from Picosynechococcus sp. (strain ATCC 27264 / PCC 7002 / PR-6) (Agmenellum quadruplicatum).